The chain runs to 357 residues: Glucose 1-dehydrogenase (357 aa).

Asp38 contributes to the Zn(2+) binding site. Residues Thr40 and His49 each contribute to the substrate site. Positions 63 and 64 each coordinate Zn(2+). Glu114 and Glu150 together coordinate substrate. Glu150 contacts Zn(2+). NADP(+)-binding positions include 181 to 184 (NGSL), 207 to 208 (RR), Ser228, 272 to 274 (LGV), and 301 to 303 (SVN). Position 303 (Asn303) interacts with substrate.

The protein belongs to the zinc-containing alcohol dehydrogenase family. Glucose 1-dehydrogenase subfamily. Homodimer. Requires Zn(2+) as cofactor.

The catalysed reaction is D-glucose + NAD(+) = D-glucono-1,5-lactone + NADH + H(+). It carries out the reaction D-glucose + NADP(+) = D-glucono-1,5-lactone + NADPH + H(+). Its activity is regulated as follows. Activated by molar concentrations of KCl or NaCl. Inhibited by EDTA in vitro. Functionally, catalyzes the NAD(P)(+)-dependent oxidation of D-glucose to D-gluconate. Displays broad substrate specificity since it is able to catalyze the oxidation of a number of alternative aldose sugars, such as D-xylose, D-galactose, and D-fucose, to the corresponding glyconate. Can utilize both NAD(+) and NADP(+) as electron acceptor, with a preference for NADP(+). Physiologically, seems to be involved in the degradation of glucose through a modified Entner-Doudoroff pathway. The polypeptide is Glucose 1-dehydrogenase (Haloferax mediterranei (strain ATCC 33500 / DSM 1411 / JCM 8866 / NBRC 14739 / NCIMB 2177 / R-4) (Halobacterium mediterranei)).